A 151-amino-acid chain; its full sequence is UPF0719 transmembrane protein MAP_1032c (151 aa).

Helical transmembrane passes span 20-40, 60-80, 90-110, and 130-150; these read VATI…FYAV, AVVV…TAIA, LVGV…ALLA, and PGSF…AAAV.

This sequence belongs to the UPF0719 family.

It is found in the cell membrane. The protein is UPF0719 transmembrane protein MAP_1032c of Mycolicibacterium paratuberculosis (strain ATCC BAA-968 / K-10) (Mycobacterium paratuberculosis).